Here is a 458-residue protein sequence, read N- to C-terminus: tRNA modification GTPase MnmE (458 aa).

(6S)-5-formyl-5,6,7,8-tetrahydrofolate contacts are provided by Arg32, Glu89, and Lys128. A TrmE-type G domain is found at 224-381 (GVRVVLAGRP…LCQRLKECAG (158 aa)). Position 234 (Asn234) interacts with K(+). GTP-binding positions include 234-239 (NVGKSS), 253-259 (TDVPGTT), and 278-281 (DTAG). Ser238 serves as a coordination point for Mg(2+). Positions 253, 255, and 258 each coordinate K(+). Thr259 contributes to the Mg(2+) binding site. Lys458 contributes to the (6S)-5-formyl-5,6,7,8-tetrahydrofolate binding site.

This sequence belongs to the TRAFAC class TrmE-Era-EngA-EngB-Septin-like GTPase superfamily. TrmE GTPase family. As to quaternary structure, homodimer. Heterotetramer of two MnmE and two MnmG subunits. Requires K(+) as cofactor.

The protein localises to the cytoplasm. In terms of biological role, exhibits a very high intrinsic GTPase hydrolysis rate. Involved in the addition of a carboxymethylaminomethyl (cmnm) group at the wobble position (U34) of certain tRNAs, forming tRNA-cmnm(5)s(2)U34. This chain is tRNA modification GTPase MnmE, found in Nitrosococcus oceani (strain ATCC 19707 / BCRC 17464 / JCM 30415 / NCIMB 11848 / C-107).